We begin with the raw amino-acid sequence, 542 residues long: Sensory neuron membrane protein 2 (542 aa).

Over 1–487 (MMVMNTELRQ…MKVLTLLDIV (487 aa)) the chain is Extracellular. N-linked (GlcNAc...) asparagine glycosylation is found at N33, N128, N238, and N274. 3 disulfides stabilise this stretch: C283-C351, C312-C378, and C353-C367. A helical membrane pass occupies residues 488 to 508 (QWVMIGSGLLLAIIMPIVYFI). Topologically, residues 509–542 (KRRPSSGSITPTLTTTTSTVSISDGGGLGGNPQK) are cytoplasmic.

The protein belongs to the CD36 family. In terms of tissue distribution, detected in the antenna, legs and wings. Higher levels of expression detected in male compared to female.

The protein resides in the cell membrane. Functionally, plays an olfactory role that is not restricted to pheromone sensitivity. This Aedes aegypti (Yellowfever mosquito) protein is Sensory neuron membrane protein 2.